The following is a 695-amino-acid chain: Elongation factor G (695 aa).

The tr-type G domain maps to 5-280 (SHYRNIGIFA…AVIDFLPSPT (276 aa)). GTP-binding positions include 14-21 (AHVDAGKT), 78-82 (DTPGH), and 132-135 (NKLD). The segment at 279–299 (PTEVDPQPLTDEETGEPTGEV) is disordered.

The protein belongs to the TRAFAC class translation factor GTPase superfamily. Classic translation factor GTPase family. EF-G/EF-2 subfamily.

Its subcellular location is the cytoplasm. Its function is as follows. Catalyzes the GTP-dependent ribosomal translocation step during translation elongation. During this step, the ribosome changes from the pre-translocational (PRE) to the post-translocational (POST) state as the newly formed A-site-bound peptidyl-tRNA and P-site-bound deacylated tRNA move to the P and E sites, respectively. Catalyzes the coordinated movement of the two tRNA molecules, the mRNA and conformational changes in the ribosome. This Alteromonas mediterranea (strain DSM 17117 / CIP 110805 / LMG 28347 / Deep ecotype) protein is Elongation factor G.